The following is a 446-amino-acid chain: tRNA modification GTPase MnmE (446 aa).

(6S)-5-formyl-5,6,7,8-tetrahydrofolate is bound by residues Arg24, Glu81, and Lys120. The TrmE-type G domain maps to 216–368 (GLHAVLIGPP…LHTRLRELAL (153 aa)). Asn226 is a binding site for K(+). Residues 226-231 (NAGKSS), 245-251 (TDVAGTT), and 270-273 (DTAG) contribute to the GTP site. Ser230 contributes to the Mg(2+) binding site. Residues Thr245, Val247, and Thr250 each contribute to the K(+) site. Thr251 contributes to the Mg(2+) binding site. Lys446 serves as a coordination point for (6S)-5-formyl-5,6,7,8-tetrahydrofolate.

Belongs to the TRAFAC class TrmE-Era-EngA-EngB-Septin-like GTPase superfamily. TrmE GTPase family. Homodimer. Heterotetramer of two MnmE and two MnmG subunits. K(+) is required as a cofactor.

The protein resides in the cytoplasm. Exhibits a very high intrinsic GTPase hydrolysis rate. Involved in the addition of a carboxymethylaminomethyl (cmnm) group at the wobble position (U34) of certain tRNAs, forming tRNA-cmnm(5)s(2)U34. This chain is tRNA modification GTPase MnmE, found in Xanthomonas campestris pv. campestris (strain 8004).